Reading from the N-terminus, the 60-residue chain is ERPLCNECFICDRSGDPRCLCEDHVPQCHEGCHQCEKVDTRSGTTMYQCRSFEYYDCANE.

Cystine bridges form between Cys5-Cys21, Cys11-Cys19, Cys28-Cys35, and Cys32-Cys49.

It belongs to the Bowman-Birk serine protease inhibitor family. Expressed in bulb (at protein level).

Its function is as follows. Serine protease inhibitor. Strongly inhibits trypsin (Ki = 0.22 nM) and very weakly inhibits chymotrypsin (Ki = 1200 nM). Does not inhibit bacterial subtilisin. The chain is Bowman-Birk type proteinase inhibitor C1 from Hyacinthus orientalis (Common hyacinth).